The sequence spans 317 residues: GTPase Era (317 aa).

Residues 17 to 190 (RAGFACFVGR…ADLLTPLLPE (174 aa)) form the Era-type G domain. Residues 25-32 (GRPNAGKS) form a G1 region. 25-32 (GRPNAGKS) serves as a coordination point for GTP. The interval 51–55 (QTTRH) is G2. The tract at residues 72–75 (DTPG) is G3. Residues 72 to 76 (DTPGL) and 135 to 138 (TKTD) each bind GTP. The tract at residues 135–138 (TKTD) is G4. Residues 169–171 (VSA) are G5. The KH type-2 domain occupies 221–303 (VRDELPHSIA…FLDLHVKVAK (83 aa)).

Belongs to the TRAFAC class TrmE-Era-EngA-EngB-Septin-like GTPase superfamily. Era GTPase family. Monomer.

It localises to the cytoplasm. It is found in the cell membrane. An essential GTPase that binds both GDP and GTP, with rapid nucleotide exchange. Plays a role in 16S rRNA processing and 30S ribosomal subunit biogenesis and possibly also in cell cycle regulation and energy metabolism. The sequence is that of GTPase Era from Streptomyces coelicolor (strain ATCC BAA-471 / A3(2) / M145).